We begin with the raw amino-acid sequence, 440 residues long: MCRQNCRAKSSPEEVISTDENLLIYCKPVRLYNIFHLRSLGNPSFLPRCLNYKIGAKRKRKSRSTGMVVFNYKDCNNTLQRTEVREDCSCPFCSMLCGSFKGLQFHLNSSHDLFEFEFKLLEEYQTVNVSVKLNSFIFEEEGSDDDKFEPFSLCSKPRKRRQRGGRNNTRRLKVCFLPLDSPSLANGTENGIALLNDGNRGLGYPEATELAGQFEMTSNIPPAIAHSSLDAGAKVILTTEAVVPATKTRKLSAERSEARSHLLLQKRQFYHSHRVQPMALEQVMSDRDSEDEVDDDVADFEDRQMLDDFVDVNKDEKQFMHLWNSFVRKQRVIADGHISWACEVFSRFYEKELHCYSSLFWCWRLFLIKLWNHGLVDSATINNCNTILENCRNTSVTNNNNNSVDHPSDSNTNNNNIVDHPNDIKNKNNVDNKDNNSRDK.

The segment at 86-111 adopts a C2H2-type zinc-finger fold; it reads EDCSCPFCSMLCGSFKGLQFHLNSSH. The short motif at 156–163 is the Nuclear localization signal element; sequence KPRKRRQR. Positions 267 to 345 are VEFS-box; sequence RQFYHSHRVQ…GHISWACEVF (79 aa). Residues 398–440 are disordered; the sequence is NNNNNSVDHPSDSNTNNNNIVDHPNDIKNKNNVDNKDNNSRDK. The span at 420–440 shows a compositional bias: basic and acidic residues; the sequence is HPNDIKNKNNVDNKDNNSRDK.

It belongs to the VEFS (VRN2-EMF2-FIS2-SU(Z)12) family. Probable component of a PcG complex. In plants, PcG complexes are probably composed of a member of the EZ family (CLF or MEA), FIE, and a member of the VEFS family (FIS2, VRN2 or EMF2). Component of the plant homeodomain / polycomb repressive complex 2 (PHD-PRC2) large complex during prolonged cold, composed of core PRC2 components (VRN2, EZA1, FIE and MSI1), and three related PHD finger proteins (VIL1, VIL2 and VIN3) that mediates histone H3 trimethylation on 'Lys-27' (H3K27me3). Binds to ALP1. Weakly expressed. Expressed both during, and in the absence of vernalization.

It localises to the nucleus. In terms of biological role, polycomb group (PcG) protein. Plays a central role in vernalization by maintaining repressed the homeotic gene FLC, a floral repressor, after a cold treatment. PcG proteins act by forming multiprotein complexes, which are required to maintain the transcriptionally repressive state of homeotic genes throughout development. PcG proteins are not required to initiate repression, but to maintain it during later stages of development. They probably act via the methylation of histones, rendering chromatin heritably changed in its expressibility. Associates constitutively along the whole FLC locus. The protein is Polycomb group protein VERNALIZATION 2 (VRN2) of Arabidopsis thaliana (Mouse-ear cress).